Here is a 480-residue protein sequence, read N- to C-terminus: Protein nucleotidyltransferase YdiU (480 aa).

Residues Gly-86, Gly-88, Arg-89, Lys-109, Asp-121, Gly-122, Arg-172, and Arg-179 each coordinate ATP. The Proton acceptor role is filled by Asp-248. Positions 249 and 258 each coordinate Mg(2+). Asp-258 contributes to the ATP binding site.

This sequence belongs to the SELO family. It depends on Mg(2+) as a cofactor. The cofactor is Mn(2+).

It catalyses the reaction L-seryl-[protein] + ATP = 3-O-(5'-adenylyl)-L-seryl-[protein] + diphosphate. The catalysed reaction is L-threonyl-[protein] + ATP = 3-O-(5'-adenylyl)-L-threonyl-[protein] + diphosphate. It carries out the reaction L-tyrosyl-[protein] + ATP = O-(5'-adenylyl)-L-tyrosyl-[protein] + diphosphate. The enzyme catalyses L-histidyl-[protein] + UTP = N(tele)-(5'-uridylyl)-L-histidyl-[protein] + diphosphate. It catalyses the reaction L-seryl-[protein] + UTP = O-(5'-uridylyl)-L-seryl-[protein] + diphosphate. The catalysed reaction is L-tyrosyl-[protein] + UTP = O-(5'-uridylyl)-L-tyrosyl-[protein] + diphosphate. Nucleotidyltransferase involved in the post-translational modification of proteins. It can catalyze the addition of adenosine monophosphate (AMP) or uridine monophosphate (UMP) to a protein, resulting in modifications known as AMPylation and UMPylation. This Salmonella enteritidis PT4 (strain P125109) protein is Protein nucleotidyltransferase YdiU.